Consider the following 314-residue polypeptide: tRNA dimethylallyltransferase (314 aa).

Residue 9–16 coordinates ATP; it reads GPTAVGKT. 11–16 is a substrate binding site; that stretch reads TAVGKT. Residues 34 to 37 are interaction with substrate tRNA; sequence DSMQ.

It belongs to the IPP transferase family. Monomer. Requires Mg(2+) as cofactor.

It carries out the reaction adenosine(37) in tRNA + dimethylallyl diphosphate = N(6)-dimethylallyladenosine(37) in tRNA + diphosphate. Functionally, catalyzes the transfer of a dimethylallyl group onto the adenine at position 37 in tRNAs that read codons beginning with uridine, leading to the formation of N6-(dimethylallyl)adenosine (i(6)A). The polypeptide is tRNA dimethylallyltransferase (Clostridium tetani (strain Massachusetts / E88)).